Reading from the N-terminus, the 162-residue chain is MKSRNFFSKLKEESYDVGIFDLMNAKVYLEKDLTYLPEDYKKGYLEDFFTFFPEVLREIKNKTEEEIEDFEINEEEIKKVDSRICSMGSIGASRDSYEKLVKTVINYLIFINKRPLHALTTRFPGGKQIIEKNGNYYCPIKNAQSNELSICEFCICKDLNEL.

The protein belongs to the UPF0305 family.

The polypeptide is UPF0305 protein MmarC6_0221 (Methanococcus maripaludis (strain C6 / ATCC BAA-1332)).